A 141-amino-acid polypeptide reads, in one-letter code: uncharacterized protein (141 aa).

A run of 3 helical transmembrane segments spans residues 32–52 (LIVLIFSILIAISAYISTSII), 69–89 (IIALISTFIGGIVAWLIIAGF), and 109–129 (FTGYGFLPNIVGALITIPIAY).

It is found in the cell membrane. This is an uncharacterized protein from Methanocaldococcus jannaschii (strain ATCC 43067 / DSM 2661 / JAL-1 / JCM 10045 / NBRC 100440) (Methanococcus jannaschii).